The primary structure comprises 373 residues: ATP phosphoribosyltransferase regulatory subunit (373 aa).

It belongs to the class-II aminoacyl-tRNA synthetase family. HisZ subfamily. As to quaternary structure, heteromultimer composed of HisG and HisZ subunits.

Its subcellular location is the cytoplasm. It participates in amino-acid biosynthesis; L-histidine biosynthesis; L-histidine from 5-phospho-alpha-D-ribose 1-diphosphate: step 1/9. Required for the first step of histidine biosynthesis. May allow the feedback regulation of ATP phosphoribosyltransferase activity by histidine. This Rhizobium leguminosarum bv. trifolii (strain WSM2304) protein is ATP phosphoribosyltransferase regulatory subunit.